The chain runs to 634 residues: MAVIGIDLGTTNSCVAVMEGGDAKAIENSEGARTTPSIVAFTDSERLVGDPAKRQATTNAKNTIYASKRLIGRRYQDVKDIKSSYEVVSAKNGDAWIKVLGKEYSPSQIGAFVLEKMKETAERHLGHKVEKAVITVPAYFNDAQRQATKDAGKIAGLDVIRIINEPTAAALAYGLNKSDKQKVIAVYDLGGGTFDVSILEIADGVFEVKATNGDTMLGGEDFDHAIMDYLMDDFKKTTGIDLHNDAMAVQRIKEASEKAKIELSNRMETDINLPFISSDSTGPKHLSLKLTRAKFENLVDDLIQRTIEPCKKALKDAGISADKIDEVVLVGGMTRVPKVIQKVKEFFGREPHKGVNPDEVVAIGAAIQGSILAGDVRDVLLLDVTPLSLGIETLGGVFTPLIERNTTIPTKKSQVFSTAEDGQTAVTIKVYQGERKMAADNKLLGQFSLEGIPSAPRGMPQIEVTFDIDANGIVHVSAKDKASGKEQAIKIQSSGGLSDDEIQRMIKEAEQKAGEDEKRKKFIELKNNGENLVHSTEKSLNEYGDKIPNSDRLEIENAIRDVRDALGNSDVESVDILQQKVDHLMKVSMKLGEALYGNANNTSSTESTTTNNNNEEDSKVVDSDYQEIDKKDGK.

At threonine 193 the chain carries Phosphothreonine; by autocatalysis. The segment at 597–634 is disordered; sequence GNANNTSSTESTTTNNNNEEDSKVVDSDYQEIDKKDGK. Over residues 600–613 the composition is skewed to low complexity; that stretch reads NNTSSTESTTTNNN. The segment covering 616–634 has biased composition (basic and acidic residues); that stretch reads EDSKVVDSDYQEIDKKDGK.

Belongs to the heat shock protein 70 family.

Functionally, acts as a chaperone. The protein is Chaperone protein DnaK of Ehrlichia canis (strain Jake).